The chain runs to 353 residues: tRNA-cytidine(32) 2-sulfurtransferase (353 aa).

The short motif at 49-54 (SGGKDS) is the PP-loop motif element. [4Fe-4S] cluster-binding residues include Cys124, Cys127, and Cys215.

The protein belongs to the TtcA family. Homodimer. The cofactor is Mg(2+). [4Fe-4S] cluster serves as cofactor.

Its subcellular location is the cytoplasm. The catalysed reaction is cytidine(32) in tRNA + S-sulfanyl-L-cysteinyl-[cysteine desulfurase] + AH2 + ATP = 2-thiocytidine(32) in tRNA + L-cysteinyl-[cysteine desulfurase] + A + AMP + diphosphate + H(+). It functions in the pathway tRNA modification. In terms of biological role, catalyzes the ATP-dependent 2-thiolation of cytidine in position 32 of tRNA, to form 2-thiocytidine (s(2)C32). The sulfur atoms are provided by the cysteine/cysteine desulfurase (IscS) system. The polypeptide is tRNA-cytidine(32) 2-sulfurtransferase (Sodalis glossinidius (strain morsitans)).